The following is a 397-amino-acid chain: Enoyl-[acyl-carrier-protein] reductase [NADH] (397 aa).

NAD(+) contacts are provided by residues 48-53, 74-75, 111-112, and 139-140; these read GASTGY, FE, DA, and LA. Tyrosine 225 is a binding site for substrate. Tyrosine 235 acts as the Proton donor in catalysis. Residues lysine 244 and 273-275 each bind NAD(+); that span reads VVT.

Belongs to the TER reductase family. Monomer.

It carries out the reaction a 2,3-saturated acyl-[ACP] + NAD(+) = a (2E)-enoyl-[ACP] + NADH + H(+). Its pathway is lipid metabolism; fatty acid biosynthesis. Functionally, involved in the final reduction of the elongation cycle of fatty acid synthesis (FAS II). Catalyzes the reduction of a carbon-carbon double bond in an enoyl moiety that is covalently linked to an acyl carrier protein (ACP). This Pseudoalteromonas translucida (strain TAC 125) protein is Enoyl-[acyl-carrier-protein] reductase [NADH].